Here is a 426-residue protein sequence, read N- to C-terminus: Serine--tRNA ligase (426 aa).

An L-serine-binding site is contributed by 233–235 (TAE). 264 to 266 (RSE) contributes to the ATP binding site. Position 287 (Glu-287) interacts with L-serine. Residue 351–354 (EISS) participates in ATP binding. Ser-387 contributes to the L-serine binding site.

It belongs to the class-II aminoacyl-tRNA synthetase family. Type-1 seryl-tRNA synthetase subfamily. Homodimer. The tRNA molecule binds across the dimer.

The protein localises to the cytoplasm. It carries out the reaction tRNA(Ser) + L-serine + ATP = L-seryl-tRNA(Ser) + AMP + diphosphate + H(+). The enzyme catalyses tRNA(Sec) + L-serine + ATP = L-seryl-tRNA(Sec) + AMP + diphosphate + H(+). The protein operates within aminoacyl-tRNA biosynthesis; selenocysteinyl-tRNA(Sec) biosynthesis; L-seryl-tRNA(Sec) from L-serine and tRNA(Sec): step 1/1. Its function is as follows. Catalyzes the attachment of serine to tRNA(Ser). Is also able to aminoacylate tRNA(Sec) with serine, to form the misacylated tRNA L-seryl-tRNA(Sec), which will be further converted into selenocysteinyl-tRNA(Sec). The protein is Serine--tRNA ligase of Clostridium botulinum (strain Langeland / NCTC 10281 / Type F).